The following is a 793-amino-acid chain: Probable phosphoketolase (793 aa).

The protein belongs to the XFP family. Requires thiamine diphosphate as cofactor.

The chain is Probable phosphoketolase from Gloeobacter violaceus (strain ATCC 29082 / PCC 7421).